The sequence spans 482 residues: Serine carboxypeptidase-like 36 (482 aa).

A signal peptide spans 1–25; sequence MGKRQDWSVTACIFLFLSLASQIHC. 3 disulfide bridges follow: C119–C363, C275–C286, and C310–C331. Residue S210 is part of the active site. N228 carries an N-linked (GlcNAc...) asparagine glycan. Residues N312 and N352 are each glycosylated (N-linked (GlcNAc...) asparagine). D402 is an active-site residue. N418 and N444 each carry an N-linked (GlcNAc...) asparagine glycan. H455 is an active-site residue.

Belongs to the peptidase S10 family. As to expression, expressed in seedlings, flowers and siliques.

It is found in the secreted. Its function is as follows. Probable carboxypeptidase. In Arabidopsis thaliana (Mouse-ear cress), this protein is Serine carboxypeptidase-like 36 (SCPL36).